Here is a 296-residue protein sequence, read N- to C-terminus: Protein FAM221A (296 aa).

The segment at 235–263 (MQPPSTSSPQPLAVGPSTQISSLRKPEED) is disordered. The segment covering 237–256 (PPSTSSPQPLAVGPSTQISS) has biased composition (polar residues).

This sequence belongs to the FAM221 family.

The protein is Protein FAM221A (Fam221a) of Rattus norvegicus (Rat).